Here is a 463-residue protein sequence, read N- to C-terminus: L-seryl-tRNA(Sec) selenium transferase (463 aa).

Lys-295 bears the N6-(pyridoxal phosphate)lysine mark.

It belongs to the SelA family. In terms of assembly, homodecamer; pentamer of dimers. Binds only one seryl-tRNA(Sec) per dimer. It depends on pyridoxal 5'-phosphate as a cofactor.

Its subcellular location is the cytoplasm. The enzyme catalyses L-seryl-tRNA(Sec) + selenophosphate + H(+) = L-selenocysteinyl-tRNA(Sec) + phosphate. The protein operates within aminoacyl-tRNA biosynthesis; selenocysteinyl-tRNA(Sec) biosynthesis; selenocysteinyl-tRNA(Sec) from L-seryl-tRNA(Sec) (bacterial route): step 1/1. In terms of biological role, converts seryl-tRNA(Sec) to selenocysteinyl-tRNA(Sec) required for selenoprotein biosynthesis. This Escherichia fergusonii (strain ATCC 35469 / DSM 13698 / CCUG 18766 / IAM 14443 / JCM 21226 / LMG 7866 / NBRC 102419 / NCTC 12128 / CDC 0568-73) protein is L-seryl-tRNA(Sec) selenium transferase.